The chain runs to 494 residues: MPNNTLQHTEAPTYRVVTYGCQMNVHDSERIAGLLEEAGYVPDPRTDTLAPADVVVFNTCAVRENADNRLYGTLGHMAAVKSAHPGMQLAVGGCMAQKDKDTVVARAPWVDVVFGTHNVGSLPVLLKRARHNATAQVEIEESLVTFPSNLPARRDSAYSAWVSISVGCNNTCTFCIVPQLRGKETDRRPGEILSEIRALVNEGVQEITLLGQNVNSYGVQFGDRGAFAKLLRACGNIDGLERVRFTSPHPAAFTDDVIEAMAETPNVMPSLHMPLQSGSDEVLRRMRRSYRSTKFLGILDRVREAIPHAAITTDIIVGFPGETDKDFAETMRIVEESRFSAAFTFQYSIRPNTPAGVMKDQVPKPVVQERYEQLVELVDDIAWQENKAQVGRAVEVMFAQGEGRKDEATHRVTGRARDNRLVHVSLNPGDDVPRPGDIGEVVITSGHPHHLVADGGLVNLRRTRGGDAWHARQGQVSQGTPTVLGLPTVGVPRH.

Residues 12-131 form the MTTase N-terminal domain; that stretch reads PTYRVVTYGC…LPVLLKRARH (120 aa). C21, C60, C94, C168, C172, and C175 together coordinate [4Fe-4S] cluster. In terms of domain architecture, Radical SAM core spans 154-385; sequence RDSAYSAWVS…ELVDDIAWQE (232 aa). A TRAM domain is found at 387 to 457; it reads KAQVGRAVEV…PHHLVADGGL (71 aa).

Belongs to the methylthiotransferase family. MiaB subfamily. In terms of assembly, monomer. [4Fe-4S] cluster serves as cofactor.

The protein resides in the cytoplasm. The catalysed reaction is N(6)-dimethylallyladenosine(37) in tRNA + (sulfur carrier)-SH + AH2 + 2 S-adenosyl-L-methionine = 2-methylsulfanyl-N(6)-dimethylallyladenosine(37) in tRNA + (sulfur carrier)-H + 5'-deoxyadenosine + L-methionine + A + S-adenosyl-L-homocysteine + 2 H(+). Catalyzes the methylthiolation of N6-(dimethylallyl)adenosine (i(6)A), leading to the formation of 2-methylthio-N6-(dimethylallyl)adenosine (ms(2)i(6)A) at position 37 in tRNAs that read codons beginning with uridine. This Cutibacterium acnes (strain DSM 16379 / KPA171202) (Propionibacterium acnes) protein is tRNA-2-methylthio-N(6)-dimethylallyladenosine synthase.